We begin with the raw amino-acid sequence, 212 residues long: ER lumen protein-retaining receptor 2 (212 aa).

The Lumenal segment spans residues 1–4 (MNIF). A helical transmembrane segment spans residues 5 to 24 (RLTGDLSHLAAIVILLLKIW). Over 25–32 (KTRSCAGI) the chain is Cytoplasmic. The chain crosses the membrane as a helical span at residues 33-52 (SGKSQLLFALVFTTRYLDLF). The interaction with the K-D-E-L motif on target proteins stretch occupies residues 47–48 (RY). Topologically, residues 53–58 (TSFISL) are lumenal. A helical transmembrane segment spans residues 59-79 (YNTSMKVIYLACSYATVYLIY). Residues 80-92 (LKFKATYDGNHDT) are Cytoplasmic-facing. A helical transmembrane segment spans residues 93 to 110 (FRVEFLVVPVGGLSFLVN). The Lumenal segment spans residues 111–116 (HDFSPL). Residues 117-135 (EILWTFSIYLESVAILPQL) traverse the membrane as a helical segment. The Cytoplasmic segment spans residues 136–149 (FMISKTGEAETITT). Residues 150 to 168 (HYLFFLGLYRALYLVNWIW) traverse the membrane as a helical segment. Residues 159–169 (RALYLVNWIWR) are interaction with the K-D-E-L motif on target proteins. Residues 169 to 178 (RFYFEGFFDL) lie on the Lumenal side of the membrane. Residues 179–199 (IAVVAGVVQTILYCDFFYLYI) form a helical membrane-spanning segment. Residues 200–212 (TKVLKGKKLSLPA) are Cytoplasmic-facing. The segment at 204 to 207 (KGKK) is important for recycling of cargo proteins with the sequence motif K-D-E-L from the Golgi to the endoplasmic reticulum.

It belongs to the ERD2 family.

The protein resides in the endoplasmic reticulum membrane. It is found in the golgi apparatus membrane. It localises to the cytoplasmic vesicle. The protein localises to the COPI-coated vesicle membrane. Its function is as follows. Membrane receptor that binds the K-D-E-L sequence motif in the C-terminal part of endoplasmic reticulum resident proteins and maintains their localization in that compartment by participating to their vesicle-mediated recycling back from the Golgi. Binding is pH dependent, and is optimal at pH 5-5.4. This is ER lumen protein-retaining receptor 2 (KDELR2) from Homo sapiens (Human).